The primary structure comprises 1833 residues: Protein TIC 214 (1833 aa).

6 consecutive transmembrane segments (helical) span residues 18–38, 67–87, 90–110, 127–147, 175–195, and 218–238; these read IINS…FSIG, FIMG…HLAL, PHTI…WNNH, LSIQ…YFIL, VGWL…LVWI, and IFSI…PSPI. A disordered region spans residues 254 to 301; sequence EETNLEIEKTSETKETKQEEEGFTEEDPSPSLFSEEKEDPDKIDETEK. 2 stretches are compositionally biased toward basic and acidic residues: residues 259–273 and 292–301; these read EIEK…KQEE and DPDKIDETEK.

Belongs to the TIC214 family. Part of the Tic complex.

The protein resides in the plastid. It localises to the chloroplast inner membrane. Functionally, involved in protein precursor import into chloroplasts. May be part of an intermediate translocation complex acting as a protein-conducting channel at the inner envelope. The polypeptide is Protein TIC 214 (Spinacia oleracea (Spinach)).